The sequence spans 707 residues: Elongation factor G (707 aa).

One can recognise a tr-type G domain in the interval 8–297 (ERVRNIGIAA…AVVDYLPSPV (290 aa)). GTP contacts are provided by residues 17–24 (AHIDAGKT), 96–100 (DTPGH), and 150–153 (NKMD).

The protein belongs to the TRAFAC class translation factor GTPase superfamily. Classic translation factor GTPase family. EF-G/EF-2 subfamily.

The protein resides in the cytoplasm. In terms of biological role, catalyzes the GTP-dependent ribosomal translocation step during translation elongation. During this step, the ribosome changes from the pre-translocational (PRE) to the post-translocational (POST) state as the newly formed A-site-bound peptidyl-tRNA and P-site-bound deacylated tRNA move to the P and E sites, respectively. Catalyzes the coordinated movement of the two tRNA molecules, the mRNA and conformational changes in the ribosome. The sequence is that of Elongation factor G from Synechococcus sp. (strain JA-2-3B'a(2-13)) (Cyanobacteria bacterium Yellowstone B-Prime).